Reading from the N-terminus, the 642-residue chain is Threonine--tRNA ligase (642 aa).

The 63-residue stretch at 1–63 (MNDITVTLPD…YNDARVVIVT (63 aa)) folds into the TGS domain. Residues 242–533 (DHRKIGQELD…LIEHFNGKFP (292 aa)) form a catalytic region. Cysteine 334, histidine 385, and histidine 510 together coordinate Zn(2+).

Belongs to the class-II aminoacyl-tRNA synthetase family. In terms of assembly, homodimer. Zn(2+) is required as a cofactor.

It is found in the cytoplasm. The catalysed reaction is tRNA(Thr) + L-threonine + ATP = L-threonyl-tRNA(Thr) + AMP + diphosphate + H(+). Its function is as follows. Catalyzes the attachment of threonine to tRNA(Thr) in a two-step reaction: L-threonine is first activated by ATP to form Thr-AMP and then transferred to the acceptor end of tRNA(Thr). This chain is Threonine--tRNA ligase, found in Haloquadratum walsbyi (strain DSM 16790 / HBSQ001).